Reading from the N-terminus, the 480-residue chain is DnaJ homolog subfamily A member 3, mitochondrial (480 aa).

At arginine 58 the chain carries Omega-N-methylarginine; by CARM1. Residues aspartate 93 to glycine 158 enclose the J domain. Lysine 134 carries the N6-acetyllysine modification. The CR-type zinc-finger motif lies at glycine 223–lysine 301. Position 236 (cysteine 236) interacts with Zn(2+). CXXCXGXG motif repeat units follow at residues cysteine 236–glycine 243, cysteine 253–glycine 260, cysteine 275–glycine 282, and cysteine 289–glycine 296. An Omega-N-methylarginine; by CARM1 modification is found at arginine 238. Zn(2+)-binding residues include cysteine 239, cysteine 253, cysteine 256, cysteine 275, cysteine 278, cysteine 289, and cysteine 292. Position 293 is an omega-N-methylarginine; by CARM1 (arginine 293). The residue at position 398 (serine 398) is a Phosphoserine. Residues leucine 443–glycine 456 are compositionally biased toward polar residues. A disordered region spans residues leucine 443 to leucine 471.

Interacts with JAK2, HSPA9B and IFN-gammaR2 chain. Interacts with Ras GTPase-activating protein 1 (RASA1). Isoform 2 interacts with MUSK (via the cytoplasmic domain). Tyrosine phosphorylated. Widely expressed with highest levels in heart, liver, lung and skeletal muscles. Also expressed in keratinocytes; expression level and distribution is altered in basal cell carcinomas.

It localises to the mitochondrion matrix. It is found in the cytoplasm. The protein localises to the cytosol. Its subcellular location is the postsynaptic cell membrane. Its function is as follows. Modulates apoptotic signal transduction or effector structures within the mitochondrial matrix. Affect cytochrome C release from the mitochondria and caspase 3 activation, but not caspase 8 activation. Isoform 1 increases apoptosis triggered by both TNF and the DNA-damaging agent mytomycin C; in sharp contrast, isoform 2 suppresses apoptosis. Can modulate IFN-gamma-mediated transcriptional activity. Isoform 2 may play a role in neuromuscular junction development as an effector of the MUSK signaling pathway. The chain is DnaJ homolog subfamily A member 3, mitochondrial (DNAJA3) from Homo sapiens (Human).